The chain runs to 151 residues: Transcriptional regulator MraZ (151 aa).

SpoVT-AbrB domains follow at residues 5–52 (ANAI…PLDE) and 81–124 (AVDL…DEDA).

It belongs to the MraZ family. Forms oligomers.

Its subcellular location is the cytoplasm. It localises to the nucleoid. In Pseudomonas fluorescens (strain Pf0-1), this protein is Transcriptional regulator MraZ.